The primary structure comprises 304 residues: Fluoroacetate dehalogenase (304 aa).

An AB hydrolase-1 domain is found at Pro26 to Tyr151. The active-site Nucleophile is Asp104. Fluoroacetate-binding residues include Arg105, Arg108, His149, Trp150, and Tyr212. His271 (proton acceptor) is an active-site residue.

This sequence belongs to the AB hydrolase superfamily. Epoxide hydrolase family. As to quaternary structure, homodimer.

It carries out the reaction a haloacetate + H2O = a halide anion + glycolate + H(+). The enzyme catalyses fluoroacetate + H2O = fluoride + glycolate + H(+). Its function is as follows. Catalyzes the hydrolytic defluorination of fluoroacetate to produce glycolate. Has only very low activity towards chloroacetate and bromoacetate. The polypeptide is Fluoroacetate dehalogenase (fac-dex) (Burkholderia sp).